We begin with the raw amino-acid sequence, 204 residues long: Nascent polypeptide-associated complex subunit alpha-like protein 3 (204 aa).

Over residues 1-23 (MTAEQKVELAAKLEEQKIDLDKP) the composition is skewed to basic and acidic residues. Disordered regions lie at residues 1 to 68 (MTAE…AMLK) and 141 to 165 (GETS…EEGV). A compositionally biased stretch (acidic residues) spans 24–43 (EVEDDDDNDEDDSEDDDEAE). Position 36 is a phosphoserine (S36). Positions 44 to 59 (GHDGEAGGRSKQSRSE) are enriched in basic and acidic residues. The NAC-A/B domain maps to 56–121 (SRSEKKSRKA…AKIEDLSSQL (66 aa)). The span at 141–152 (GETSSAATAAAV) shows a compositional bias: low complexity. Positions 153 to 164 (QDDDDEEVDEEG) are enriched in acidic residues. The UBA domain maps to 159 to 204 (EVDEEGVEPKDIELVMTQAGVSKPRAVKALKLANGDIVSAIMELTT).

Belongs to the NAC-alpha family.

Its function is as follows. May promote appropriate targeting of ribosome-nascent polypeptide complexes. The chain is Nascent polypeptide-associated complex subunit alpha-like protein 3 from Arabidopsis thaliana (Mouse-ear cress).